A 620-amino-acid chain; its full sequence is MSEVSGDYNSDSDESLSLQPKRTKSGKLHNANADTLFEVSSKLSPNTDRDPGNVGNVPLEPTRTRKGDLVPVGKNHEVPDLQRQDVSVGVFKGPPTRTGTQLPTKIDPEQKTPDIRSEKLRKSVEEEALPPSKMTKSEKKQKESIKEKSTEPYEVTKPKFPDRKLRKSTEEADLKPHFKSTEQSGTEQPEQTKFPDKKLRQSTKKKVSGPLEDFEEESRRPIDEASLELSQKRPLKASKKAQKSSFDEKFPEMLEQITVELLDDQEETQEESIKEKVPEPLGDRKPSAQKHKLRKSSERSKLKDTLIEPSKDKDPGLQTQTEFPKEKLIKTTEKTGDKPQQITDPDIQEKSQPEPTEKNLELPNKPKPEEERDLPKEDKPESSKPNYPAGKDKLALPAKIKTEFIVGSPRESVESFSTLYETQEFLKDLQTDMNELFPIVDASESQTELRDSTVLPQEVELLGRKETKPSLTPEFEHLTWSPERVAEWISDLGFPQYKECFTENFINGQKLIHVNCSNLPQMGITDFEDMKAISYHTRVLLGIEEPLFSRSISLPYRDNKGLFFEQKGHSGVKSDSLTLAKFVEAAGLQEYNPEIKAEEKKEDALPENSLEENEELYEAT.

The disordered stretch occupies residues 1–394 (MSEVSGDYNS…PNYPAGKDKL (394 aa)). 3 stretches are compositionally biased toward basic and acidic residues: residues 62–83 (TRTR…DLQR), 106–125 (IDPE…KSVE), and 135–180 (TKSE…HFKS). Residues 181–191 (TEQSGTEQPEQ) are compositionally biased toward polar residues. Residues 233–242 (RPLKASKKAQ) show a composition bias toward basic residues. Over residues 261 to 270 (LLDDQEETQE) the composition is skewed to acidic residues. Basic and acidic residues-rich tracts occupy residues 271–286 (ESIK…DRKP), 295–315 (KSSE…DKDP), 323–337 (FPKE…KTGD), and 347–382 (IQEK…KPES). One can recognise an SAM domain in the interval 480 to 543 (WSPERVAEWI…SYHTRVLLGI (64 aa)). Positions 594 to 604 (EIKAEEKKEDA) are enriched in basic and acidic residues. A disordered region spans residues 594 to 620 (EIKAEEKKEDALPENSLEENEELYEAT). The segment covering 609-620 (SLEENEELYEAT) has biased composition (acidic residues).

The chain is Sterile alpha motif domain-containing protein 15 (Samd15) from Mus musculus (Mouse).